The following is a 219-amino-acid chain: NADH-ubiquinone oxidoreductase 23 kDa subunit, mitochondrial (219 aa).

2 consecutive 4Fe-4S ferredoxin-type domains span residues arginine 111–glutamate 140 and threonine 150–asparagine 179. Residues cysteine 120, cysteine 123, cysteine 126, cysteine 130, cysteine 159, cysteine 162, cysteine 165, and cysteine 169 each coordinate [4Fe-4S] cluster.

This sequence belongs to the complex I 23 kDa subunit family. Complex I is composed of about 40 different subunits. The cofactor is [4Fe-4S] cluster.

The protein localises to the mitochondrion. The enzyme catalyses a ubiquinone + NADH + 5 H(+)(in) = a ubiquinol + NAD(+) + 4 H(+)(out). Its function is as follows. Core subunit of the mitochondrial membrane respiratory chain NADH dehydrogenase (Complex I) that is believed to belong to the minimal assembly required for catalysis. Complex I functions in the transfer of electrons from NADH to the respiratory chain. The immediate electron acceptor for the enzyme is believed to be ubiquinone. May donate electrons to ubiquinone. The sequence is that of NADH-ubiquinone oxidoreductase 23 kDa subunit, mitochondrial (nuo21.3c) from Neurospora crassa (strain ATCC 24698 / 74-OR23-1A / CBS 708.71 / DSM 1257 / FGSC 987).